Consider the following 693-residue polypeptide: MDYNKLRNIGISAHIDSGKTTLTERILFYCNKIHAIHEVKGKDGVGATMDSMELERERGITIASAATHVEWKDFPINIIDTPGHVDFTIEVERSLRVLDGAILVLDSVAGVQSQSITVDRQLKRYSVPRLAFVNKCDKTGANPYNVKDQLRSKLDLNSVLMQIPIGLEDKHIGVIDLVLMKAYYFEGKDGTEIIEKEIPSDLLEEAKSKREIMLDTLADFNDELMELHMEGKEVPTEIIYNATRTGTLALKLCPVFMGSAYKNKGVQLLLDAVTRFLPSPHDIKNTALDLNNNEKEIDLKIDNELPTVALAFKLEDGQYGQLTYVRIYQGILKKGQELINSRTSKKFKVGRLIRMHANNTEDIEFGGSGDIVALFGIECASGDTFCDPSINYSMTSMFIPDPVISLSVKPKDKKSADNMAKALGRFTKEDPTFKTYVDIESNETIIQGMGELHLEVYIERMKREFKAEVETGMPQVAYRETITRKAEFNYTHKKQSGGAGQFGRVAGFMEPLDKEGETYEFVNLIKGGVIPTEYIPSCDKGFQKAMERGTLIGFPIVDIKITINDGQYHIVDSSDIAFQLAAIGAFREAYEKAKPTILEPIMKVTLEGPTEFQGNMFGLLNQRRGIITGSLEDGSFSKVEAEVPLSEMFGFSTVLRSSTQGKAEFSMEFLRYGKVPSTIFDELRKKFNDQNKS.

The tr-type G domain maps to 4–281 (NKLRNIGISA…AVTRFLPSPH (278 aa)). Residues 13–20 (AHIDSGKT), 80–84 (DTPGH), and 134–137 (NKCD) contribute to the GTP site.

The protein belongs to the TRAFAC class translation factor GTPase superfamily. Classic translation factor GTPase family. EF-G/EF-2 subfamily.

The protein localises to the cytoplasm. Its function is as follows. Catalyzes the GTP-dependent ribosomal translocation step during translation elongation. During this step, the ribosome changes from the pre-translocational (PRE) to the post-translocational (POST) state as the newly formed A-site-bound peptidyl-tRNA and P-site-bound deacylated tRNA move to the P and E sites, respectively. Catalyzes the coordinated movement of the two tRNA molecules, the mRNA and conformational changes in the ribosome. The polypeptide is Elongation factor G 1 (fusA) (Borreliella burgdorferi (strain ATCC 35210 / DSM 4680 / CIP 102532 / B31) (Borrelia burgdorferi)).